Reading from the N-terminus, the 555-residue chain is Phosphomethylpyrimidine synthase (555 aa).

The interval valine 78–arginine 104 is disordered. Residues asparagine 191, methionine 220, tyrosine 249, histidine 285, serine 305 to glycine 307, aspartate 346 to arginine 349, and glutamate 385 each bind substrate. Histidine 389 serves as a coordination point for Zn(2+). Tyrosine 412 contacts substrate. Zn(2+) is bound at residue histidine 453. Residues cysteine 535, cysteine 538, and cysteine 543 each coordinate [4Fe-4S] cluster.

This sequence belongs to the ThiC family. [4Fe-4S] cluster is required as a cofactor.

The catalysed reaction is 5-amino-1-(5-phospho-beta-D-ribosyl)imidazole + S-adenosyl-L-methionine = 4-amino-2-methyl-5-(phosphooxymethyl)pyrimidine + CO + 5'-deoxyadenosine + formate + L-methionine + 3 H(+). It functions in the pathway cofactor biosynthesis; thiamine diphosphate biosynthesis. In terms of biological role, catalyzes the synthesis of the hydroxymethylpyrimidine phosphate (HMP-P) moiety of thiamine from aminoimidazole ribotide (AIR) in a radical S-adenosyl-L-methionine (SAM)-dependent reaction. In Chlorobaculum parvum (strain DSM 263 / NCIMB 8327) (Chlorobium vibrioforme subsp. thiosulfatophilum), this protein is Phosphomethylpyrimidine synthase.